Here is a 482-residue protein sequence, read N- to C-terminus: Butyrophilin-like protein 2 (482 aa).

Residues 1-6 lie on the Cytoplasmic side of the membrane; sequence MVDFPG. A helical; Signal-anchor for type II membrane protein membrane pass occupies residues 7-23; that stretch reads YNLSGAVASFLFILLTM. Residues 24-482 are Extracellular-facing; sequence KQSEDFRVIG…VAVGLPRKRS (459 aa). Ig-like V-type domains follow at residues 29–140, 142–234, and 236–355; these read FRVI…LLLK, AGLG…SVIS, and PEKL…ASLD. 3 cysteine pairs are disulfide-bonded: C50–C124, C164–C218, and C267–C341. A glycan (N-linked (GlcNAc...) asparagine) is linked at N210. N427 carries N-linked (GlcNAc...) asparagine glycosylation.

Belongs to the immunoglobulin superfamily. BTN/MOG family. As to expression, expressed in brain, heart, kidney, liver, pancreas, ovary, leukocyte, small intestine, testis and thymus.

It localises to the membrane. Functionally, negative regulator of T-cell proliferation. This Homo sapiens (Human) protein is Butyrophilin-like protein 2.